The chain runs to 442 residues: Glutamate-1-semialdehyde 2,1-aminomutase (442 aa).

An N6-(pyridoxal phosphate)lysine modification is found at K282.

Belongs to the class-III pyridoxal-phosphate-dependent aminotransferase family. HemL subfamily. Homodimer. Pyridoxal 5'-phosphate serves as cofactor.

It localises to the cytoplasm. The catalysed reaction is (S)-4-amino-5-oxopentanoate = 5-aminolevulinate. It participates in porphyrin-containing compound metabolism; protoporphyrin-IX biosynthesis; 5-aminolevulinate from L-glutamyl-tRNA(Glu): step 2/2. This is Glutamate-1-semialdehyde 2,1-aminomutase from Polaromonas sp. (strain JS666 / ATCC BAA-500).